Reading from the N-terminus, the 179-residue chain is Large ribosomal subunit protein uL6 (179 aa).

Belongs to the universal ribosomal protein uL6 family. As to quaternary structure, part of the 50S ribosomal subunit.

In terms of biological role, this protein binds to the 23S rRNA, and is important in its secondary structure. It is located near the subunit interface in the base of the L7/L12 stalk, and near the tRNA binding site of the peptidyltransferase center. This Mycolicibacterium gilvum (strain PYR-GCK) (Mycobacterium gilvum (strain PYR-GCK)) protein is Large ribosomal subunit protein uL6.